A 213-amino-acid chain; its full sequence is Probable nicotinate-nucleotide adenylyltransferase (213 aa).

Belongs to the NadD family.

It catalyses the reaction nicotinate beta-D-ribonucleotide + ATP + H(+) = deamido-NAD(+) + diphosphate. The protein operates within cofactor biosynthesis; NAD(+) biosynthesis; deamido-NAD(+) from nicotinate D-ribonucleotide: step 1/1. Its function is as follows. Catalyzes the reversible adenylation of nicotinate mononucleotide (NaMN) to nicotinic acid adenine dinucleotide (NaAD). This Escherichia coli O45:K1 (strain S88 / ExPEC) protein is Probable nicotinate-nucleotide adenylyltransferase.